The primary structure comprises 407 residues: Methyltransferase/ribosomally synthesized type I borosin cyclic peptide precursor ceuMA2 (407 aa).

The segment at M1 to R246 is methyltransferase domain. Catalysis depends on residues R70, Y74, and Y96. S-adenosyl-L-methionine contacts are provided by Y96, H98, V101, A128, Q170, G208, S239, and T240. Residues E247–T370 form a clasp domain region. Residues P371 to S393 form a precursor leader region. 2 positions are modified to N-methylthreonine: T399 and T400. I401 carries the post-translational modification N-methylisoleucine. Residues V402 and V403 each carry the N-methylvaline modification. I404 carries the post-translational modification N-methylisoleucine. At V405 the chain carries N-methylvaline. The residue at position 406 (H406) is an N-methylhistidine.

It in the N-terminal section; belongs to the precorrin methyltransferase family. As to quaternary structure, homodimer. CeuMA2 automethylates at Thr-399, Thr-400, Ile-401, Val-402, Val-403, Ile-404, Val-405 and His-406 before being processed by a prolyloligopeptidase which likely forms a peptidyl ester upon removal of the follower propeptide, which then undergoes macrocyclization with the N-terminus of the modified core peptide. Peptide backbone alpha-N-methylations change the physicochemical properties of amide bonds to provide structural constraints and other favorable characteristics including biological membrane permeability to peptides.

The protein operates within secondary metabolite biosynthesis. Fusion protein of the methyltransferase ceuM2 and a type I borosin core peptide; part of the gene cluster that mediates the biosynthesis of a type I borosin, a highly methylated cyclic peptide with potent biological activities. Type I borosins derive from the C-terminus of the fusion protein, and it is the same protein that methylates its own C-terminus using S-adenosyl methionine (SAM). The C-terminus is subsequently cleaved off and macrocyclized by a prolyloligopeptidase to give the final product. The polypeptide is Methyltransferase/ribosomally synthesized type I borosin cyclic peptide precursor ceuMA2 (Cerrena unicolor (Canker rot fungus)).